The following is a 210-amino-acid chain: LexA repressor (210 aa).

Positions 30-50 (RVEIAREIGFKSPNAAEEHLK) form a DNA-binding region, H-T-H motif. Residues Ser-127 and Lys-164 each act as for autocatalytic cleavage activity in the active site.

Belongs to the peptidase S24 family. Homodimer.

The enzyme catalyses Hydrolysis of Ala-|-Gly bond in repressor LexA.. Its function is as follows. Represses a number of genes involved in the response to DNA damage (SOS response), including recA and lexA. In the presence of single-stranded DNA, RecA interacts with LexA causing an autocatalytic cleavage which disrupts the DNA-binding part of LexA, leading to derepression of the SOS regulon and eventually DNA repair. This is LexA repressor from Actinobacillus pleuropneumoniae serotype 5b (strain L20).